An 89-amino-acid chain; its full sequence is Small ribosomal subunit protein bS20 (89 aa).

The disordered stretch occupies residues 1–28; it reads MTLANIKSAKKRAVQSEKRRQHNASQRS.

Belongs to the bacterial ribosomal protein bS20 family.

In terms of biological role, binds directly to 16S ribosomal RNA. The protein is Small ribosomal subunit protein bS20 of Haemophilus ducreyi (strain 35000HP / ATCC 700724).